We begin with the raw amino-acid sequence, 338 residues long: Serpentine receptor class alpha-31 (338 aa).

7 helical membrane-spanning segments follow: residues 23-43, 59-79, 108-125, 142-162, 188-208, 240-260, and 276-296; these read GNHC…VFAI, LLFS…GIRI, LYYY…SLFF, FSKI…YWIF, VNEF…VIFF, VCII…TTEI, and SIAF…IIIY.

Belongs to the nematode receptor-like protein sra family.

It localises to the membrane. The sequence is that of Serpentine receptor class alpha-31 (sra-31) from Caenorhabditis elegans.